The primary structure comprises 118 residues: MARVKRGVTTHARHKKVLKQSKGFVGRSSTNYRIALERLEKALRYAYRDRRNKKREFRALWIQRINAAVREQGMTYSQFIAALKAANIELDRKVLAAMAFDDPAGFTAIVEAAKAVRG.

The protein belongs to the bacterial ribosomal protein bL20 family.

Its function is as follows. Binds directly to 23S ribosomal RNA and is necessary for the in vitro assembly process of the 50S ribosomal subunit. It is not involved in the protein synthesizing functions of that subunit. The protein is Large ribosomal subunit protein bL20 of Acidiphilium cryptum (strain JF-5).